The sequence spans 125 residues: MSLPKDLLYTEEHEWVKAEDGSYIIGITDFAQDQLGDIVFVELPEVGDTVTKGDSIGSIESVKTVSDFYAPVTGKVVAVNETLEDEPELINSNPYDTGWILKLTEVEEADVTALLSSDDYEKGLD.

A Lipoyl-binding domain is found at 22 to 104 (SYIIGITDFA…YDTGWILKLT (83 aa)). K63 is subject to N6-lipoyllysine.

This sequence belongs to the GcvH family. As to quaternary structure, the glycine cleavage system is composed of four proteins: P, T, L and H. (R)-lipoate serves as cofactor.

Its function is as follows. The glycine cleavage system catalyzes the degradation of glycine. The H protein shuttles the methylamine group of glycine from the P protein to the T protein. Functionally, is also involved in protein lipoylation via its role as an octanoyl/lipoyl carrier protein intermediate. This Listeria innocua serovar 6a (strain ATCC BAA-680 / CLIP 11262) protein is Glycine cleavage system H protein.